Here is a 141-residue protein sequence, read N- to C-terminus: Flagellar assembly factor FliW (141 aa).

It belongs to the FliW family. As to quaternary structure, interacts with translational regulator CsrA and flagellin(s).

The protein localises to the cytoplasm. Acts as an anti-CsrA protein, binds CsrA and prevents it from repressing translation of its target genes, one of which is flagellin. Binds to flagellin and participates in the assembly of the flagellum. The polypeptide is Flagellar assembly factor FliW (Clostridium botulinum (strain Alaska E43 / Type E3)).